The chain runs to 1218 residues: Protein jagged-1 (1218 aa).

Positions 1–33 (MRSPRTRGRSGRPLSLLLALLCALRAKVCGASG) are cleaved as a signal peptide. The Extracellular segment spans residues 34 to 1067 (QFELEILSMQ…QRRPLKNRTD (1034 aa)). A glycan (N-linked (GlcNAc...) asparagine) is linked at N143. The 45-residue stretch at 185-229 (VTCDDYYYGFGCNKFCRPRDDFFGHYACDQNGNKTCMEGWMGPEC) folds into the DSL domain. Cystine bridges form between C187/C196 and C200/C212. Residues 199 to 207 (FCRPRDDFF) form an important for interaction with NOTCH1 region. N217 carries an N-linked (GlcNAc...) asparagine glycan. Cystine bridges form between C220–C229, C234–C245, C238–C251, C253–C262, C265–C276, C271–C282, C284–C293, C300–C312, C306–C322, C324–C333, C340–C351, C345–C360, C362–C371, C378–C389, C383–C398, C400–C409, C416–C427, C421–C436, C438–C447, C454–C464, C458–C473, C475–C484, C491–C502, C496–C511, C513–C522, C529–C540, C534–C549, C551–C560, C578–C605, C599–C615, C617–C626, C633–C644, C638–C653, C655–C664, C671–C682, C676–C691, C693–C702, C709–C720, C714–C729, and C731–C740. The EGF-like 1 domain maps to 230–263 (NRAICRQGCSPKHGSCKLPGDCRCQYGWQGLYCD). Residues 264–294 (KCIPHPGCVHGICNEPWQCLCETNWGGQLCD) form the EGF-like 2; atypical domain. 2 consecutive EGF-like domains span residues 296–334 (DLNY…PNCE) and 336–372 (AEHA…PTCS). Residues 374–410 (NIDDCSPNNCSHGGTCQDLVNGFKCVCPPQWTGKTCQ) form the EGF-like 5; calcium-binding domain. Residue N382 is glycosylated (N-linked (GlcNAc...) asparagine). The EGF-like 6; calcium-binding domain maps to 412 to 448 (DANECEAKPCVNAKSCKNLIASYYCDCLPGWMGQNCD). One can recognise an EGF-like 7; calcium-binding domain in the interval 450-485 (NINDCLGQCQNDASCRDLVNGYRCICPPGYAGDHCE). The EGF-like 8; calcium-binding domain occupies 487–523 (DIDECASNPCLNGGHCQNEINRFQCLCPTGFSGNLCQ). 2 EGF-like domains span residues 525-561 (DIDY…KNCS) and 586-627 (DTPE…TYCH). N-linked (GlcNAc...) asparagine glycosylation occurs at N559. Positions 629–665 (NINDCESNPCRNGGTCIDGVNSYKCICSDGWEGAYCE) constitute an EGF-like 11; calcium-binding domain. The region spanning 667–703 (NINDCSQNPCHNGGTCRDLVNDFYCDCKNGWKGKTCH) is the EGF-like 12; calcium-binding domain. EGF-like domains are found at residues 705 to 741 (RDSQ…TTCN) and 744 to 780 (RNSS…PICA). N-linked (GlcNAc...) asparagine glycosylation occurs at N745. 9 disulfide bridges follow: C748/C759, C753/C768, C770/C779, C786/C797, C791/C806, C808/C817, C824/C835, C829/C844, and C846/C855. The EGF-like 15; calcium-binding domain occupies 782–818 (NTNDCSPHPCYNSGTCVDGDNWYRCECAPGFAGPDCR). The EGF-like 16; calcium-binding domain occupies 820-856 (NINECQSSPCAFGATCVDEINGYRCVCPPGHSGAKCQ). Residues N960, N991, N1045, and N1064 are each glycosylated (N-linked (GlcNAc...) asparagine). A helical transmembrane segment spans residues 1068-1093 (FLVPLLSSVLTVAWICCLVTAFYWCL). Residues 1094–1218 (RKRRKPGSHT…QSLNRMEYIV (125 aa)) are Cytoplasmic-facing. The disordered stretch occupies residues 1152–1218 (HNSEVEEDDM…QSLNRMEYIV (67 aa)). Residues 1189–1199 (TPTKHPNWTNK) are compositionally biased toward polar residues.

In terms of assembly, interacts with NOTCH2 and NOTCH3. Interacts with NOTCH1 (in the presence of calcium ions). As to expression, widely expressed in adult and fetal tissues. In cervix epithelium expressed in undifferentiated subcolumnar reserve cells and squamous metaplasia. Expression is up-regulated in cervical squamous cell carcinoma. Expressed in bone marrow cell line HS-27a which supports the long-term maintenance of immature progenitor cells.

Its subcellular location is the membrane. The protein localises to the cell membrane. Functionally, ligand for multiple Notch receptors and involved in the mediation of Notch signaling. May be involved in cell-fate decisions during hematopoiesis. Seems to be involved in early and late stages of mammalian cardiovascular development. Inhibits myoblast differentiation. Enhances fibroblast growth factor-induced angiogenesis (in vitro). The sequence is that of Protein jagged-1 (JAG1) from Homo sapiens (Human).